Reading from the N-terminus, the 287-residue chain is 4-hydroxybenzoate octaprenyltransferase (287 aa).

Transmembrane regions (helical) follow at residues 41–61 (LPLL…GCAI), 92–112 (VALA…LNAL), 133–153 (FFAI…PMAF), 160–180 (VPML…AYDT), 218–238 (LGIY…WLGW), and 267–287 (NNWL…ATWF).

Belongs to the UbiA prenyltransferase family. Mg(2+) is required as a cofactor.

The protein resides in the cell inner membrane. The enzyme catalyses all-trans-octaprenyl diphosphate + 4-hydroxybenzoate = 4-hydroxy-3-(all-trans-octaprenyl)benzoate + diphosphate. It participates in cofactor biosynthesis; ubiquinone biosynthesis. Functionally, catalyzes the prenylation of para-hydroxybenzoate (PHB) with an all-trans polyprenyl group. Mediates the second step in the final reaction sequence of ubiquinone-8 (UQ-8) biosynthesis, which is the condensation of the polyisoprenoid side chain with PHB, generating the first membrane-bound Q intermediate 3-octaprenyl-4-hydroxybenzoate. The protein is 4-hydroxybenzoate octaprenyltransferase of Paraburkholderia xenovorans (strain LB400).